The following is a 356-amino-acid chain: S-adenosylmethionine:tRNA ribosyltransferase-isomerase (356 aa).

It belongs to the QueA family. In terms of assembly, monomer.

The protein localises to the cytoplasm. The catalysed reaction is 7-aminomethyl-7-carbaguanosine(34) in tRNA + S-adenosyl-L-methionine = epoxyqueuosine(34) in tRNA + adenine + L-methionine + 2 H(+). The protein operates within tRNA modification; tRNA-queuosine biosynthesis. Its function is as follows. Transfers and isomerizes the ribose moiety from AdoMet to the 7-aminomethyl group of 7-deazaguanine (preQ1-tRNA) to give epoxyqueuosine (oQ-tRNA). In Yersinia pseudotuberculosis serotype O:3 (strain YPIII), this protein is S-adenosylmethionine:tRNA ribosyltransferase-isomerase.